A 147-amino-acid polypeptide reads, in one-letter code: uncharacterized protein (147 aa).

The ABM domain maps to 50–138 (IVVAGNIKVK…LLAKPAEIKI (89 aa)).

This sequence belongs to the LsrG family.

This is an uncharacterized protein from Synechocystis sp. (strain ATCC 27184 / PCC 6803 / Kazusa).